The primary structure comprises 98 residues: Co-chaperonin GroES (98 aa).

This sequence belongs to the GroES chaperonin family. As to quaternary structure, heptamer of 7 subunits arranged in a ring. Interacts with the chaperonin GroEL.

The protein localises to the cytoplasm. Its function is as follows. Together with the chaperonin GroEL, plays an essential role in assisting protein folding. The GroEL-GroES system forms a nano-cage that allows encapsulation of the non-native substrate proteins and provides a physical environment optimized to promote and accelerate protein folding. GroES binds to the apical surface of the GroEL ring, thereby capping the opening of the GroEL channel. The protein is Co-chaperonin GroES of Allorhizobium ampelinum (strain ATCC BAA-846 / DSM 112012 / S4) (Agrobacterium vitis (strain S4)).